A 70-amino-acid chain; its full sequence is ATP synthase subunit c (70 aa).

A run of 2 helical transmembrane segments spans residues Ile-4–Ile-24 and Ile-45–Phe-65.

It belongs to the ATPase C chain family. In terms of assembly, F-type ATPases have 2 components, F(1) - the catalytic core - and F(0) - the membrane proton channel. F(1) has five subunits: alpha(3), beta(3), gamma(1), delta(1), epsilon(1). F(0) has three main subunits: a(1), b(2) and c(10-14). The alpha and beta chains form an alternating ring which encloses part of the gamma chain. F(1) is attached to F(0) by a central stalk formed by the gamma and epsilon chains, while a peripheral stalk is formed by the delta and b chains.

The protein localises to the cell membrane. Its function is as follows. F(1)F(0) ATP synthase produces ATP from ADP in the presence of a proton or sodium gradient. F-type ATPases consist of two structural domains, F(1) containing the extramembraneous catalytic core and F(0) containing the membrane proton channel, linked together by a central stalk and a peripheral stalk. During catalysis, ATP synthesis in the catalytic domain of F(1) is coupled via a rotary mechanism of the central stalk subunits to proton translocation. Key component of the F(0) channel; it plays a direct role in translocation across the membrane. A homomeric c-ring of between 10-14 subunits forms the central stalk rotor element with the F(1) delta and epsilon subunits. The sequence is that of ATP synthase subunit c from Staphylococcus haemolyticus (strain JCSC1435).